The chain runs to 127 residues: Alkaline proteinase inhibitor (127 aa).

The signal sequence occupies residues 1-26; that stretch reads MNINYFVRIVPVAVVLLVGISGASMA. The cysteines at positions 53 and 70 are disulfide-linked.

It belongs to the protease inhibitor I38 family.

The protein resides in the periplasm. Inhibitor of the alkaline protease. This Pseudomonas syringae pv. tomato (strain ATCC BAA-871 / DC3000) protein is Alkaline proteinase inhibitor (inh).